The chain runs to 909 residues: Nitrate reductase [NADH] (909 aa).

Cys187 lines the Mo-molybdopterin pocket. Residues 535–610 form the Cytochrome b5 heme-binding domain; that stretch reads SKMYSMSEVK…LEDFRIGELI (76 aa). His570 and His593 together coordinate heme. The FAD-binding FR-type domain maps to 652–764; the sequence is REKIPCKLVD…KGPLGHIEYQ (113 aa). FAD-binding positions include 704–707, 721–725, Phe726, Phe733, 738–740, and Thr791; these read RAYT, VVKIY, and QMS.

The protein belongs to the nitrate reductase family. As to quaternary structure, homodimer. FAD serves as cofactor. Heme is required as a cofactor. Requires Mo-molybdopterin as cofactor.

It carries out the reaction nitrite + NAD(+) + H2O = nitrate + NADH + H(+). With respect to regulation, regulated by the nitrogen source and controlled by the circadian rhythm. Its function is as follows. Nitrate reductase is a key enzyme involved in the first step of nitrate assimilation in plants, fungi and bacteria. This is Nitrate reductase [NADH] (NIA) from Petunia hybrida (Petunia).